The following is a 666-amino-acid chain: Probable potassium transport system protein Kup (666 aa).

Helical transmembrane passes span 53 to 73 (FWALTLGSIGVVFGDIGTSPL), 89 to 109 (VTPVIVLGVLSLILWSLFIVV), 144 to 164 (LLLLALGVVGASMFIGDSMIT), 181 to 201 (PEFGNYVVPLTLLILVMLFAV), 212 to 232 (AFAPVMALWFVAIAVLGALHI), 247 to 267 (AIHFLLNHGLIGLVIMGLVFL), 291 to 311 (WFCLVLPALLLNYFGQGALIL), 324 to 344 (LAPAPMILPLVILATAATVIA), 381 to 401 (IYLPRVNILLLIGVLLLVLLF), 411 to 431 (YGIAVSTTMVADGIMGFVVVW), 441 to 461 (AAALVVPLVVVDIMFFSANLL), and 463 to 483 (LLDGAWVPLLFGLIMVVLIWT).

This sequence belongs to the HAK/KUP transporter (TC 2.A.72) family.

It is found in the cell inner membrane. It carries out the reaction K(+)(in) + H(+)(in) = K(+)(out) + H(+)(out). Its function is as follows. Transport of potassium into the cell. Likely operates as a K(+):H(+) symporter. This Nitrobacter hamburgensis (strain DSM 10229 / NCIMB 13809 / X14) protein is Probable potassium transport system protein Kup.